The primary structure comprises 156 residues: 6,7-dimethyl-8-ribityllumazine synthase (156 aa).

5-amino-6-(D-ribitylamino)uracil-binding positions include Phe25, 59 to 61, and 83 to 85; these read AWE and AVI. 88-89 lines the (2S)-2-hydroxy-3-oxobutyl phosphate pocket; that stretch reads ST. The Proton donor role is filled by His91. Asn116 serves as a coordination point for 5-amino-6-(D-ribitylamino)uracil. Arg130 serves as a coordination point for (2S)-2-hydroxy-3-oxobutyl phosphate.

The protein belongs to the DMRL synthase family. As to quaternary structure, forms an icosahedral capsid composed of 60 subunits, arranged as a dodecamer of pentamers.

The catalysed reaction is (2S)-2-hydroxy-3-oxobutyl phosphate + 5-amino-6-(D-ribitylamino)uracil = 6,7-dimethyl-8-(1-D-ribityl)lumazine + phosphate + 2 H2O + H(+). It participates in cofactor biosynthesis; riboflavin biosynthesis; riboflavin from 2-hydroxy-3-oxobutyl phosphate and 5-amino-6-(D-ribitylamino)uracil: step 1/2. Catalyzes the formation of 6,7-dimethyl-8-ribityllumazine by condensation of 5-amino-6-(D-ribitylamino)uracil with 3,4-dihydroxy-2-butanone 4-phosphate. This is the penultimate step in the biosynthesis of riboflavin. This is 6,7-dimethyl-8-ribityllumazine synthase from Acinetobacter baylyi (strain ATCC 33305 / BD413 / ADP1).